A 78-amino-acid polypeptide reads, in one-letter code: Large ribosomal subunit protein bL28 (78 aa).

Belongs to the bacterial ribosomal protein bL28 family.

The chain is Large ribosomal subunit protein bL28 from Alcanivorax borkumensis (strain ATCC 700651 / DSM 11573 / NCIMB 13689 / SK2).